The chain runs to 141 residues: Putative nickel-responsive regulator (141 aa).

Ni(2+) contacts are provided by His-80, His-91, His-93, and Cys-99.

The protein belongs to the transcriptional regulatory CopG/NikR family. It depends on Ni(2+) as a cofactor.

Its function is as follows. Transcriptional regulator. This Methanococcus maripaludis (strain C5 / ATCC BAA-1333) protein is Putative nickel-responsive regulator.